We begin with the raw amino-acid sequence, 432 residues long: Adenylosuccinate synthetase (432 aa).

Residues 12-18 and 40-42 contribute to the GTP site; these read GDEGKGK and GHT. The Proton acceptor role is filled by Asp13. Asp13 and Gly40 together coordinate Mg(2+). Residues 13-16, 38-41, Thr132, Arg146, Gln226, Thr241, and Arg305 each bind IMP; these read DEGK and NAGH. The active-site Proton donor is His41. Residue 301-307 participates in substrate binding; that stretch reads VVTGRKR. Residues Arg307, 333–335, and 415–417 each bind GTP; these read KLD and STS.

The protein belongs to the adenylosuccinate synthetase family. In terms of assembly, homodimer. The cofactor is Mg(2+).

Its subcellular location is the cytoplasm. The catalysed reaction is IMP + L-aspartate + GTP = N(6)-(1,2-dicarboxyethyl)-AMP + GDP + phosphate + 2 H(+). Its pathway is purine metabolism; AMP biosynthesis via de novo pathway; AMP from IMP: step 1/2. Plays an important role in the de novo pathway of purine nucleotide biosynthesis. Catalyzes the first committed step in the biosynthesis of AMP from IMP. The sequence is that of Adenylosuccinate synthetase from Rhizobium johnstonii (strain DSM 114642 / LMG 32736 / 3841) (Rhizobium leguminosarum bv. viciae).